We begin with the raw amino-acid sequence, 73 residues long: Large ribosomal subunit protein bL31 (73 aa).

Belongs to the bacterial ribosomal protein bL31 family. Type A subfamily. As to quaternary structure, part of the 50S ribosomal subunit.

Functionally, binds the 23S rRNA. This Rhizobium etli (strain CIAT 652) protein is Large ribosomal subunit protein bL31.